A 158-amino-acid polypeptide reads, in one-letter code: NAD(P)H-quinone oxidoreductase subunit J, chloroplastic (158 aa).

Belongs to the complex I 30 kDa subunit family. In terms of assembly, NDH is composed of at least 16 different subunits, 5 of which are encoded in the nucleus.

It is found in the plastid. The protein resides in the chloroplast thylakoid membrane. The enzyme catalyses a plastoquinone + NADH + (n+1) H(+)(in) = a plastoquinol + NAD(+) + n H(+)(out). The catalysed reaction is a plastoquinone + NADPH + (n+1) H(+)(in) = a plastoquinol + NADP(+) + n H(+)(out). Its function is as follows. NDH shuttles electrons from NAD(P)H:plastoquinone, via FMN and iron-sulfur (Fe-S) centers, to quinones in the photosynthetic chain and possibly in a chloroplast respiratory chain. The immediate electron acceptor for the enzyme in this species is believed to be plastoquinone. Couples the redox reaction to proton translocation, and thus conserves the redox energy in a proton gradient. This is NAD(P)H-quinone oxidoreductase subunit J, chloroplastic from Citrus sinensis (Sweet orange).